We begin with the raw amino-acid sequence, 62 residues long: Short neurotoxin C (62 aa).

Residues 1–16 are compositionally biased toward polar residues; that stretch reads RRCFNQQSSQPQTNKS. Positions 1 to 21 are disordered; that stretch reads RRCFNQQSSQPQTNKSCPPGE. Intrachain disulfides connect Cys3–Cys24, Cys17–Cys41, Cys43–Cys54, and Cys55–Cys60.

It belongs to the three-finger toxin family. Short-chain subfamily. Type I alpha-neurotoxin sub-subfamily. Expressed by the venom gland.

The protein localises to the secreted. Its function is as follows. Binds to muscle nicotinic acetylcholine receptor (nAChR) and inhibit acetylcholine from binding to the receptor, thereby impairing neuromuscular transmission. This is Short neurotoxin C from Laticauda crockeri (Crocker's sea snake).